A 121-amino-acid chain; its full sequence is Holo-[acyl-carrier-protein] synthase (121 aa).

Mg(2+)-binding residues include D8 and E58.

Belongs to the P-Pant transferase superfamily. AcpS family. Homotrimer. Mg(2+) serves as cofactor.

Its subcellular location is the cytoplasm. It carries out the reaction apo-[ACP] + CoA = holo-[ACP] + adenosine 3',5'-bisphosphate + H(+). Transfers the 4'-phosphopantetheine moiety from coenzyme A to a Ser of fatty acid acyl-carrier-protein ACP. Also modifies the D-alanyl carrier protein but fails to recognize PCP and AcpK, an acyl carrier protein of secondary metabolism. The sequence is that of Holo-[acyl-carrier-protein] synthase from Bacillus subtilis (strain 168).